A 466-amino-acid chain; its full sequence is Alpha-1A adrenergic receptor (466 aa).

Over 1-27 the chain is Extracellular; it reads MVFLSGNASDSSNCTQPPAPVNISKAI. N7, N13, and N22 each carry an N-linked (GlcNAc...) asparagine glycan. A helical transmembrane segment spans residues 28–51; the sequence is LLGVILGGLILFGVLGNILVILSV. The Cytoplasmic segment spans residues 52–64; that stretch reads ACHRHLHSVTHYY. The helical transmembrane segment at 65–88 threads the bilayer; the sequence is IVNLAVADLLLTSTVLPFSAIFEV. Topologically, residues 89-99 are extracellular; it reads LGYWAFGRVFC. A disulfide bridge links C99 with C176. The helical transmembrane segment at 100-122 threads the bilayer; sequence NIWAAVDVLCCTASIMGLCIISI. Residues 123 to 143 are Cytoplasmic-facing; the sequence is DRYIGVSYPLRYPTIVTQRRG. The helical transmembrane segment at 144–167 threads the bilayer; the sequence is LMALLCVWALSLVISIGPLFGWRQ. The Extracellular portion of the chain corresponds to 168 to 181; the sequence is PAPEDETICQINEE. Residues 182–205 traverse the membrane as a helical segment; sequence PGYVLFSALGSFYLPLAIILVMYC. Topologically, residues 206–273 are cytoplasmic; the sequence is RVYVVAKRES…FSREKKAAKT (68 aa). Residue S215 is modified to Phosphoserine; by PKA. The helical transmembrane segment at 274–297 threads the bilayer; the sequence is LGIVVGCFVLCWLPFFLVMPIGSF. Over 298 to 305 the chain is Extracellular; it reads FPDFKPSE. Residues 306-329 form a helical membrane-spanning segment; that stretch reads TVFKIVFWLGYLNSCINPIIYPCS. Residues 330–466 are Cytoplasmic-facing; it reads SQEFKKAFQN…ISLSENGEEV (137 aa). Residues 334–349 carry the Nuclear localization signal motif; sequence KKAFQNVLRIQCLCRK. Residue C345 is the site of S-palmitoyl cysteine attachment.

This sequence belongs to the G-protein coupled receptor 1 family. Adrenergic receptor subfamily. ADRA1A sub-subfamily. In terms of assembly, homo- and heterooligomer. Heterooligomerizes with ADRA1B homooligomers in cardiac myocytes. Interacts with CAVIN4. Post-translationally, C-terminal Ser or Thr residues may be phosphorylated. In terms of tissue distribution, expressed in heart, brain, liver and prostate, but not in kidney, lung, adrenal, aorta and pituitary. Within the prostate, expressed in the apex, base, periurethral and lateral lobe. Isoform 4 is the most abundant isoform expressed in the prostate with high levels also detected in liver and heart.

It is found in the nucleus membrane. The protein localises to the cell membrane. The protein resides in the cytoplasm. Its subcellular location is the membrane. It localises to the caveola. Functionally, this alpha-adrenergic receptor mediates its action by association with G proteins that activate a phosphatidylinositol-calcium second messenger system. Its effect is mediated by G(q) and G(11) proteins. Nuclear ADRA1A-ADRA1B heterooligomers regulate phenylephrine(PE)-stimulated ERK signaling in cardiac myocytes. The protein is Alpha-1A adrenergic receptor (ADRA1A) of Homo sapiens (Human).